Here is a 90-residue protein sequence, read N- to C-terminus: Small ribosomal subunit protein mS37 (90 aa).

An intrachain disulfide couples Cys27 to Cys58.

The protein belongs to the mitochondrion-specific ribosomal protein mS37 family. In terms of assembly, component of the mitochondrial small ribosomal subunit (mt-SSU). Mature N.crassa 74S mitochondrial ribosomes consist of a small (37S) and a large (54S) subunit. The 37S small subunit contains a 16S ribosomal RNA (16S mt-rRNA) and 32 different proteins. The 54S large subunit contains a 23S rRNA (23S mt-rRNA) and 42 different proteins.

The protein localises to the mitochondrion. Its function is as follows. Component of the mitochondrial ribosome (mitoribosome), a dedicated translation machinery responsible for the synthesis of mitochondrial genome-encoded proteins, including at least some of the essential transmembrane subunits of the mitochondrial respiratory chain. The mitoribosomes are attached to the mitochondrial inner membrane and translation products are cotranslationally integrated into the membrane. The protein is Small ribosomal subunit protein mS37 (mrp10) of Neurospora crassa (strain ATCC 24698 / 74-OR23-1A / CBS 708.71 / DSM 1257 / FGSC 987).